The sequence spans 938 residues: Auxilin (938 aa).

Positions 19 to 41 (AAAGENRMKDSENKGASSPDMEP) are disordered. 3 consecutive repeat copies span residues 61–64 (NLKD), 65–68 (NLKD), and 69–72 (TLKD). Residues 61–72 (NLKDNLKDTLKD) form a 3 X 4 AA approximate tandem repeats region. The Phosphatase tensin-type domain maps to 80–247 (SVSSYTKGDL…GYMCDLLADK (168 aa)). Serine 137 carries the phosphoserine modification. Cysteine 189 serves as the catalytic Phosphocysteine intermediate. The C2 tensin-type domain occupies 253–391 (FKPLTIKAIT…FQVTLDIEVQ (139 aa)). An SH3-binding motif is present at residues 434–442 (PADLPPDHP). The disordered stretch occupies residues 467–801 (EEDHAALVNQ…GKGSTNLEGK (335 aa)). 2 positions are modified to phosphoserine: serine 478 and serine 481. Residues 531 to 548 (DVSTNFSSLAAPPSNSEL) are compositionally biased toward polar residues. Residues 559 to 569 (TGPAQAGQAGV) are compositionally biased toward low complexity. Composition is skewed to polar residues over residues 579 to 596 (VSAQ…SASP) and 624 to 654 (FLNT…TPAV). A Phosphoserine modification is found at serine 595. Residues 679–694 (SAATSPTGSSHGTPTH) are compositionally biased toward low complexity. Residues 754 to 781 (NWQQTQSKPQSSMPHSSPQNRPNYNVSF) show a composition bias toward polar residues. In terms of domain architecture, J spans 874-938 (TKWKPVGMAD…FENQGQKPLY (65 aa)).

As to quaternary structure, forms a complex composed of HSPA8, CLTC and DNAJC6. Interacts with HSPA8/HSC70 in an ATP-dependent manner; this interaction stimulates the HSPA8's ATPase activity. Interacts with CLTC; this interaction produces a local change in heavy-chain contacts, creating a detectable global distortion of the clathrin coat. Interacts with AP2A2. Interacts with DNM1(GTP-bound form); this interaction allows clathrin-coated vesicle (CCV) formation at the plasma membrane. The N-terminus is blocked. Post-translationally, phosphorylation at Ser-595 modulates its ability to bind CLTC and therefore the synaptic vesicle endocytosis (SVE).

Its subcellular location is the cytoplasmic vesicle. The protein resides in the clathrin-coated vesicle. Functionally, may act as a protein phosphatase and/or a lipid phosphatase. Co-chaperone that recruits HSPA8/HSC70 to clathrin-coated vesicles (CCVs) and promotes the ATP-dependent dissociation of clathrin from CCVs and participates in clathrin-mediated endocytosis of synaptic vesicles and their recycling and also in intracellular trafficking. Firstly, binds tightly to the clathrin cages, at a ratio of one DNAJC6 per clathrin triskelion. The HSPA8:ATP complex then binds to the clathrin-auxilin cage, initially at a ratio of one HSPA8 per triskelion leading to ATP hydrolysis stimulation and causing a conformational change in the HSPA8. This cycle is repeated three times to drive to a complex containing the clathrin-auxilin cage associated to three HSPA8:ADP complex. The ATP hydrolysis of the third HSPA8:ATP complex leads to a concerted dismantling of the cage into component triskelia. Then, dissociates from the released triskelia and be recycled to initiate another cycle of HSPA8's recruitment. Also acts during the early steps of clathrin-coated vesicle (CCV) formation through its interaction with the GTP bound form of DNM1. The polypeptide is Auxilin (Mus musculus (Mouse)).